Reading from the N-terminus, the 1188-residue chain is DNA-directed RNA polymerase subunit beta (1188 aa).

This sequence belongs to the RNA polymerase beta chain family. In terms of assembly, the RNAP catalytic core consists of 2 alpha, 1 beta, 1 beta' and 1 omega subunit. When a sigma factor is associated with the core the holoenzyme is formed, which can initiate transcription.

It carries out the reaction RNA(n) + a ribonucleoside 5'-triphosphate = RNA(n+1) + diphosphate. Functionally, DNA-dependent RNA polymerase catalyzes the transcription of DNA into RNA using the four ribonucleoside triphosphates as substrates. The polypeptide is DNA-directed RNA polymerase subunit beta (Streptococcus pyogenes serotype M18 (strain MGAS8232)).